A 225-amino-acid polypeptide reads, in one-letter code: Glutathione S-transferase A (225 aa).

The GST N-terminal domain maps to 3 to 85; sequence KDMTLLWGSG…YLESQFKSQG (83 aa). Residue Arg-18 participates in glutathione binding. Residues 92–217 form the GST C-terminal domain; the sequence is CPAEQAMMYQ…WPPTWLESPQ (126 aa).

Belongs to the GST superfamily. Theta family. As to quaternary structure, homodimer. Found in all the tissues examined. Highest values found in liver and in intestinal mucosa.

The protein localises to the cytoplasm. It catalyses the reaction RX + glutathione = an S-substituted glutathione + a halide anion + H(+). Its function is as follows. Conjugation of reduced glutathione to a wide number of exogenous and endogenous hydrophobic electrophiles. In Pleuronectes platessa (European plaice), this protein is Glutathione S-transferase A.